A 469-amino-acid chain; its full sequence is ATP synthase subunit beta (469 aa).

156 to 163 (GGAGVGKT) is a binding site for ATP.

Belongs to the ATPase alpha/beta chains family. As to quaternary structure, F-type ATPases have 2 components, CF(1) - the catalytic core - and CF(0) - the membrane proton channel. CF(1) has five subunits: alpha(3), beta(3), gamma(1), delta(1), epsilon(1). CF(0) has three main subunits: a(1), b(2) and c(9-12). The alpha and beta chains form an alternating ring which encloses part of the gamma chain. CF(1) is attached to CF(0) by a central stalk formed by the gamma and epsilon chains, while a peripheral stalk is formed by the delta and b chains.

It is found in the cell membrane. The catalysed reaction is ATP + H2O + 4 H(+)(in) = ADP + phosphate + 5 H(+)(out). Its function is as follows. Produces ATP from ADP in the presence of a proton gradient across the membrane. The catalytic sites are hosted primarily by the beta subunits. The protein is ATP synthase subunit beta of Bacillus anthracis (strain CDC 684 / NRRL 3495).